Here is a 383-residue protein sequence, read N- to C-terminus: tRNA(Met) cytidine acetate ligase (383 aa).

ATP contacts are provided by residues 7 to 20, Gly101, Asn150, and Arg175; that span reads ITEY…HRYH.

This sequence belongs to the TmcAL family.

The protein localises to the cytoplasm. It catalyses the reaction cytidine(34) in elongator tRNA(Met) + acetate + ATP = N(4)-acetylcytidine(34) in elongator tRNA(Met) + AMP + diphosphate. Its function is as follows. Catalyzes the formation of N(4)-acetylcytidine (ac(4)C) at the wobble position of elongator tRNA(Met), using acetate and ATP as substrates. First activates an acetate ion to form acetyladenylate (Ac-AMP) and then transfers the acetyl group to tRNA to form ac(4)C34. This Lactiplantibacillus plantarum (strain ATCC BAA-793 / NCIMB 8826 / WCFS1) (Lactobacillus plantarum) protein is tRNA(Met) cytidine acetate ligase.